Reading from the N-terminus, the 700-residue chain is non-specific serine/threonine protein kinase Cdc7 (700 aa).

The 518-residue stretch at 127–644 (FDVHSRIGNG…AEEALKHPFF (518 aa)) folds into the Protein kinase domain. Residues 133–141 (IGNGTFSTV) and K163 each bind ATP. Catalysis depends on D250, which acts as the Proton acceptor.

This sequence belongs to the protein kinase superfamily. Ser/Thr protein kinase family. Component of the Dbf4-dependent kinase (DDK) complex consisting of Cdc7 and the Dbf4 ortholog chif. Interacts with chif (via the processed polypeptide Chiffon-A); the interaction is direct.

The enzyme catalyses L-seryl-[protein] + ATP = O-phospho-L-seryl-[protein] + ADP + H(+). The catalysed reaction is L-threonyl-[protein] + ATP = O-phospho-L-threonyl-[protein] + ADP + H(+). Activated by chif. Inhibited by the synthetic compound XL413. Its function is as follows. Catalytic component of the Dbf4-dependent kinase (DDK) complex. Phosphorylates components of the pre-replication complex, including Mcm2 and, to a lesser extent, Mcm4. Phosphorylates histones, including H3 and H2B. Required for DNA replication and mitotic proliferation, including during the endoreplication and amplification stages of DNA replication in egg chamber follicle cells of the ovary. The sequence is that of non-specific serine/threonine protein kinase Cdc7 from Drosophila melanogaster (Fruit fly).